Here is a 142-residue protein sequence, read N- to C-terminus: Centromere protein S (142 aa).

Positions 107–142 are disordered; that stretch reads LKGKAKKKRKPEDESRSSRESMAEELDGAEELQSES. Residues 116–128 show a composition bias toward basic and acidic residues; the sequence is KPEDESRSSRESM. Residues 129–142 are compositionally biased toward acidic residues; sequence AEELDGAEELQSES.

This sequence belongs to the TAF9 family. CENP-S/MHF1 subfamily. As to quaternary structure, heterodimer with CENPX, sometimes called MHF; this interaction stabilizes both partners. MHF heterodimers can assemble to form tetrameric structures. MHF also coassemble with CENPT-CENPW heterodimers at centromeres to form the tetrameric CENP-T-W-S-X complex. Forms a discrete complex with FANCM and CENPX, called FANCM-MHF; this interaction, probably mediated by direct binding between CENPS and FANCM, leads to synergistic activation of double-stranded DNA binding and strongly stimulates FANCM-mediated DNA remodeling. Recruited by FANCM to the Fanconi anemia (FA) core complex, which consists of CENPS, CENPX, FANCA, FANCB, FANCC, FANCE, FANCF, FANCG, FANCL, FANCM, FAAP24 and FAAP100. The FA core complex associates with Bloom syndrome (BLM) complex, which consists of at least BLM, DNA topoisomerase 3-alpha (TOP3A), RMI1/BLAP75, RPA1/RPA70 and RPA2/RPA32. The super complex between FA and BLM is called BRAFT. Component of the CENPA-CAD complex, composed of CENPI, CENPK, CENPL, CENPO, CENPP, CENPQ, CENPR and CENPS. The CENPA-CAD complex is probably recruited on centromeres by the CENPA-NAC complex, at least composed of CENPA, CENPC, CENPH, CENPM, CENPN, CENPT and CENPU.

The protein resides in the nucleus. It is found in the chromosome. The protein localises to the centromere. It localises to the kinetochore. In terms of biological role, DNA-binding component of the Fanconi anemia (FA) core complex. Required for the normal activation of the FA pathway, leading to monoubiquitination of the FANCI-FANCD2 complex in response to DNA damage, cellular resistance to DNA cross-linking drugs, and prevention of chromosomal breakage. In complex with CENPX (MHF heterodimer), crucial cofactor for FANCM in both binding and ATP-dependent remodeling of DNA. Stabilizes FANCM. In complex with CENPX and FANCM (but not other FANC proteins), rapidly recruited to blocked forks and promotes gene conversion at blocked replication forks. In complex with CENPT, CENPW and CENPX (CENP-T-W-S-X heterotetramer), involved in the formation of a functional kinetochore outer plate, which is essential for kinetochore-microtubule attachment and faithful mitotic progression. As a component of MHF and CENP-T-W-S-X complexes, binds DNA and bends it to form a nucleosome-like structure. DNA-binding function is fulfilled in the presence of CENPX, with the following preference for DNA substates: Holliday junction &gt; double-stranded &gt; splay arm &gt; single-stranded. Does not bind DNA on its own. The polypeptide is Centromere protein S (Cenps) (Mus musculus (Mouse)).